The chain runs to 268 residues: GTP cyclohydrolase FolE2 (268 aa).

The protein belongs to the GTP cyclohydrolase IV family.

The catalysed reaction is GTP + H2O = 7,8-dihydroneopterin 3'-triphosphate + formate + H(+). The protein operates within cofactor biosynthesis; 7,8-dihydroneopterin triphosphate biosynthesis; 7,8-dihydroneopterin triphosphate from GTP: step 1/1. Its function is as follows. Converts GTP to 7,8-dihydroneopterin triphosphate. This Methylococcus capsulatus (strain ATCC 33009 / NCIMB 11132 / Bath) protein is GTP cyclohydrolase FolE2.